We begin with the raw amino-acid sequence, 206 residues long: MFATTLQGFTLGLAMIIPIGAQNAFVLSRGIHRNHHLLAATLCCLCDLILIGIGVFGGANLLAASPIGLALLTWGGVLFLCWFGIRSLRSAWQGQGAALADSPRLMGVKSVLAMTLGVTLLNPHVYLDTLMLLGSFGSQFAEPLRPAFAAGAMLASLVWFYSLAFGAAALSPWLARGRVQQAIDTIVGLIMLGLALQLASGALLAS.

6 helical membrane passes run 1 to 21 (MFAT…PIGA), 37 to 57 (LLAA…GVFG), 65 to 85 (SPIG…WFGI), 116 to 136 (LGVT…LGSF), 148 to 168 (FAAG…FGAA), and 185 to 205 (TIVG…ALLA).

The protein belongs to the LysE/ArgO transporter (TC 2.A.75) family.

Its subcellular location is the cell membrane. The chain is Putative amino-acid transporter YggA (yggA) from Aeromonas salmonicida.